A 1116-amino-acid chain; its full sequence is Probable chitinase LysM11 (1116 aa).

A LysM domain is found at 233-283 (GTYTIQTNDNCAEIAAHFGVTQDDIYDLNEDTWGWAGCGTNDLKADQVICL). The GH18 domain maps to 346 to 719 (FYHVAYFEVF…LGVDPDSDEA (374 aa)). Catalysis depends on Glu466, which acts as the Proton donor. The chitin site is built by Tyr467 and Trp701.

Belongs to the glycosyl hydrolase 18 family. Chitinase class V subfamily.

The enzyme catalyses Random endo-hydrolysis of N-acetyl-beta-D-glucosaminide (1-&gt;4)-beta-linkages in chitin and chitodextrins.. In terms of biological role, probable chitinase involved in the degradation of chitin, a component of the cell walls of fungi and exoskeletal elements of some animals (including worms and arthropods). Might be involved in manipulation of host defenses for successful infection. This Penicillium expansum (Blue mold rot fungus) protein is Probable chitinase LysM11.